The sequence spans 57 residues: Granulin-3 (57 aa).

2 disulfide bridges follow: Cys4–Cys16 and Cys10–Cys26.

Belongs to the granulin family. In terms of processing, granulins are disulfide bridged. Ubiquitous.

It localises to the secreted. Functionally, granulins have possible cytokine-like activity. They may play a role in inflammation, wound repair, and tissue remodeling. This is Granulin-3 from Cyprinus carpio (Common carp).